A 358-amino-acid chain; its full sequence is Phenylalanine--tRNA ligase alpha subunit (358 aa).

Position 258 (Glu-258) interacts with Mg(2+).

The protein belongs to the class-II aminoacyl-tRNA synthetase family. Phe-tRNA synthetase alpha subunit type 1 subfamily. As to quaternary structure, tetramer of two alpha and two beta subunits. The cofactor is Mg(2+).

It is found in the cytoplasm. The catalysed reaction is tRNA(Phe) + L-phenylalanine + ATP = L-phenylalanyl-tRNA(Phe) + AMP + diphosphate + H(+). The chain is Phenylalanine--tRNA ligase alpha subunit from Rhodospirillum rubrum (strain ATCC 11170 / ATH 1.1.1 / DSM 467 / LMG 4362 / NCIMB 8255 / S1).